Here is a 317-residue protein sequence, read N- to C-terminus: MPFTIDSARGIFPNTLAADVVPATIARFSQLNAEDQLALIWFAYLEMGKTLTIAAPGAASMQLAENALKEIQAMGPLQQTQAMCDLANRADTPLCRTYASWSPNIKLGFWYRLGELMEQGFVAPIPAGYQLSANANAVLATIQGLESGQQITVLRNAVVDMGFTAGKDGKRIAEPVVPPQDTASRTKVSIEGVTNATVLNYMDNLNANDFDTLIELFTSDGALQPPFQRPIVGKENVLRFFREECQNLKLIPERGVTEPAEDGFTQIKVTGKVQTPWFGGNVGMNIAWRFLLNPEGKIFFVAIDLLASPKELLNFAR.

In terms of domain architecture, OCP N-terminal spans 18–169 (ADVVPATIAR…DMGFTAGKDG (152 aa)). Residues 34-38 (EDQLA), 37-44 (LALIWFAY), 80-83 (TQAM), 107-117 (LGFWYRLGELM), 125-129 (IPAGY), 151-161 (ITVLRNAVVDM), tyrosine 201, 245-250 (CQNLKL), 273-284 (VQTPWFGGNVGM), and tryptophan 288 contribute to the echinenone site.

It belongs to the orange carotenoid-binding protein family. In terms of assembly, monomer. Interacts with the APC core of the phycobilisome (PB), probably at a ratio of 1:1 in a light-independent manner; possibly only OCP-R binds to PBs. Interacts with FRP. Detachment from PBs is accelerated by FPR. Requires 3'-hydroxyechinenone as cofactor. Post-translationally, proteolytically cleaved into a red 16.7 kDa form named red carotenoid-binding protein (RCP) which lacks 15 residues from the N-terminus and approximately 150 residues from the C-terminus.

The protein localises to the cellular thylakoid membrane. In terms of biological role, acts as a blue-light photoreceptor and photo-protectant. Essential for inhibiting damaged induced by excess blue-green light via a process known as non-photochemical quenching (NPQ). In the dark or dim light the stable inactive form (OCP-O) is orange, upon illumination with blue-green light it converts to a metastable active red form (OCP-R), inducing energy dissipation, quenching cellular fluorescence via NPQ. One OCP-R molecule is sufficient to quench 1 phycobilisome. More OCP-R accumulates under high-light and low temperature; in the dark OCP-R spontaneously reverts to OCP-O. Reversion of OCP-O is accelerated by FRP. A kinetic study suggests conversion of OCP-O to OCP-R is limited by cis-trans proline isomerization of either Gln224-Pro225 or Pro225-Pro226. This Synechocystis sp. (strain ATCC 27184 / PCC 6803 / Kazusa) protein is Orange carotenoid-binding protein.